The primary structure comprises 456 residues: RuvB-like 1 (456 aa).

Residue Lys-2 forms a Glycyl lysine isopeptide (Lys-Gly) (interchain with G-Cter in SUMO2) linkage. Residue 70–77 (GPPGTGKT) coordinates ATP. Residue Lys-225 forms a Glycyl lysine isopeptide (Lys-Gly) (interchain with G-Cter in SUMO1); alternate linkage. Lys-225 is covalently cross-linked (Glycyl lysine isopeptide (Lys-Gly) (interchain with G-Cter in SUMO2); alternate). Residue Lys-445 forms a Glycyl lysine isopeptide (Lys-Gly) (interchain with G-Cter in SUMO2) linkage. Lys-453 carries the post-translational modification N6-acetyllysine.

The protein belongs to the RuvB family. In terms of assembly, forms homohexameric rings. Can form a dodecamer with RUVBL2 made of two stacked hexameric rings; however, even though RUVBL1 and RUVBL2 are present in equimolar ratio, the oligomeric status of each hexamer is not known. Oligomerization may regulate binding to nucleic acids and conversely, binding to nucleic acids may affect the dodecameric assembly. Interaction of the complex with DHX34 results in conformational changes of the N-terminus of the RUVBL2 subunits, resulting in loss of nucleotide binding ability and ATP hydrolysis of the complex. Interacts with the transcriptional activation domain of MYC. Component of the RNA polymerase II holoenzyme complex. May also act to bridge the LEF1/TCF1-CTNNB1 complex and TBP. Component of the NuA4 histone acetyltransferase complex which contains the catalytic subunit KAT5/TIP60 and the subunits EP400, TRRAP/PAF400, BRD8/SMAP, EPC1, DMAP1/DNMAP1, RUVBL1/TIP49, RUVBL2, ING3, actin, ACTL6A/BAF53A, MORF4L1/MRG15, MORF4L2/MRGX, MRGBP, YEATS4/GAS41, VPS72/YL1 and MEAF6. The NuA4 complex interacts with MYC and the adenovirus E1A protein. RUVBL1 interacts with EP400. Component of a NuA4-related complex which contains EP400, TRRAP/PAF400, SRCAP, BRD8/SMAP, EPC1, DMAP1/DNMAP1, RUVBL1/TIP49, RUVBL2, actin, ACTL6A/BAF53A, VPS72 and YEATS4/GAS41. Component of the BAF53 complex, at least composed of ACTL6A/BAF53A, RUVBL1/TIP49, SMARCA2/BRM, and TRRAP/PAF400. Component of some MLL1/MLL complex, at least composed of the core components KMT2A/MLL1, ASH2L, HCFC1/HCF1, WDR5 and RBBP5, as well as the facultative components BACC1, CHD8, E2F6, HSP70, INO80C, KANSL1, LAS1L, MAX, MCRS1, MGA, MYST1/MOF, PELP1, PHF20, PRP31, RING2, RUVB1/TIP49A, RUVB2/TIP49B, SENP3, TAF1, TAF4, TAF6, TAF7, TAF9 and TEX10. Associates with alpha and gamma tubulins, particularly during metaphase and early anaphase. Interacts with NPAT. Component of the chromatin-remodeling INO80 complex; specifically part of a complex module associated with the helicase ATP-binding and the helicase C-terminal domain of INO80. Interacts with IGHMBP2. Interacts with OFD1. Interacts with HINT1. Component of a complex with USP49 and PSMC5. Component of a SWR1-like complex. Component of the R2TP complex composed at least of RUVBL1, RUVBL2, RPAP3 and PIHD1. Component of the PAQosome complex which is responsible for the biogenesis of several protein complexes and which consists of R2TP complex members RUVBL1, RUVBL2, RPAP3 and PIH1D1, URI complex members PFDN2, PFDN6, PDRG1, UXT and URI1 as well as ASDURF, POLR2E and DNAAF10/WDR92. Interacts with PIH1D1. Interacts with ITFG1. Interacts with WAC; WAC positively regulates MTOR activity by promoting the assembly of the TTT complex composed of TELO2, TTI1 and TTI2 and the RUVBL complex composed of RUVBL1 and RUVBL2 into the TTT-RUVBL complex which leads to the dimerization of the mTORC1 complex and its subsequent activation. The RUVBL1/RUVBL2 complex interacts with ZNHIT1 (via HIT-type zinc finger), ZNHIT3 (via HIT-type zinc finger), ZNHIT6 (via HIT-type zinc finger) and DDX59/ZNHIT5 (via HIT-type zinc finger) in the presence of ADP. Interacts with NOPCHAP1; the interaction is direct and disrupted upon ATP binding. Interacts with SMG1. Interacts with NOP2, NOP56 and NUFIP1.

It is found in the nucleus matrix. The protein localises to the nucleus. Its subcellular location is the nucleoplasm. The protein resides in the cytoplasm. It localises to the membrane. It is found in the cytoskeleton. The protein localises to the microtubule organizing center. Its subcellular location is the centrosome. The protein resides in the dynein axonemal particle. The catalysed reaction is ATP + H2O = ADP + phosphate + H(+). In terms of biological role, possesses single-stranded DNA-stimulated ATPase and ATP-dependent DNA helicase (3' to 5') activity; hexamerization is thought to be critical for ATP hydrolysis and adjacent subunits in the ring-like structure contribute to the ATPase activity. Component of the NuA4 histone acetyltransferase complex which is involved in transcriptional activation of select genes principally by acetylation of nucleosomal histones H4 and H2A. This modification may both alter nucleosome-DNA interactions and promote interaction of the modified histones with other proteins which positively regulate transcription. This complex may be required for the activation of transcriptional programs associated with oncogene and proto-oncogene mediated growth induction, tumor suppressor mediated growth arrest and replicative senescence, apoptosis, and DNA repair. The NuA4 complex ATPase and helicase activities seem to be, at least in part, contributed by the association of RUVBL1 and RUVBL2 with EP400. NuA4 may also play a direct role in DNA repair when recruited to sites of DNA damage. Component of a SWR1-like complex that specifically mediates the removal of histone H2A.Z/H2AZ1 from the nucleosome. Proposed core component of the chromatin remodeling INO80 complex which exhibits DNA- and nucleosome-activated ATPase activity and catalyzes ATP-dependent nucleosome sliding. Plays an essential role in oncogenic transformation by MYC and also modulates transcriptional activation by the LEF1/TCF1-CTNNB1 complex. Essential for cell proliferation. May be able to bind plasminogen at cell surface and enhance plasminogen activation. This Mus musculus (Mouse) protein is RuvB-like 1 (Ruvbl1).